The following is a 315-amino-acid chain: NAD-dependent protein lipoamidase sirtuin-4, mitochondrial (315 aa).

A mitochondrion-targeting transit peptide spans 1–29 (MRMSFGLTFKRTAKVHWRANFSQQCSLRS). The 278-residue stretch at 38-315 (PPLDPEKVKE…GELLPLIDPR (278 aa)) folds into the Deacetylase sirtuin-type domain. NAD(+)-binding positions include 63–83 (GAGISTESGIPDYRSEKVGLY) and 144–147 (QNVD). Residue His162 is the Proton acceptor of the active site. Cys170, Cys173, Cys221, and Cys224 together coordinate Zn(2+). NAD(+) contacts are provided by residues 261–263 (GSS), 287–289 (NIG), and Cys305.

This sequence belongs to the sirtuin family. Class II subfamily. Interacts with GLUD1, IDE and SLC25A5. Interacts with DLAT and PDHX. Interacts with MCCC1 (via the biotin carboxylation domain). Interacts with PCCA and PC. Requires Zn(2+) as cofactor.

The protein localises to the mitochondrion matrix. It catalyses the reaction N(6)-[(R)-lipoyl]-L-lysyl-[protein] + NAD(+) + H2O = 2''-O-lipoyl-ADP-D-ribose + nicotinamide + L-lysyl-[protein]. It carries out the reaction N(6)-biotinyl-L-lysyl-[protein] + NAD(+) + H2O = 2''-O-biotinyl-ADP-D-ribose + nicotinamide + L-lysyl-[protein]. The enzyme catalyses N(6)-acetyl-L-lysyl-[protein] + NAD(+) + H2O = 2''-O-acetyl-ADP-D-ribose + nicotinamide + L-lysyl-[protein]. The catalysed reaction is L-cysteinyl-[protein] + NAD(+) = S-(ADP-D-ribosyl)-L-cysteinyl-[protein] + nicotinamide + H(+). In terms of biological role, acts as a NAD-dependent protein lipoamidase, biotinylase, deacetylase and ADP-ribosyl transferase. Catalyzes more efficiently removal of lipoyl- and biotinyl- than acetyl-lysine modifications. Inhibits the pyruvate dehydrogenase complex (PDH) activity via the enzymatic hydrolysis of the lipoamide cofactor from the E2 component, DLAT, in a phosphorylation-independent manner. Catalyzes the transfer of ADP-ribosyl groups onto target proteins, including mitochondrial GLUD1, inhibiting GLUD1 enzyme activity. Acts as a negative regulator of mitochondrial glutamine metabolism by mediating mono ADP-ribosylation of GLUD1: expressed in response to DNA damage and negatively regulates anaplerosis by inhibiting GLUD1, leading to block metabolism of glutamine into tricarboxylic acid cycle and promoting cell cycle arrest. In response to mTORC1 signal, SIRT4 expression is repressed, promoting anaplerosis and cell proliferation. Acts as a tumor suppressor. Also acts as a NAD-dependent protein deacetylase: mediates deacetylation of 'Lys-471' of MLYCD, inhibiting its activity, thereby acting as a regulator of lipid homeostasis. Does not seem to deacetylate PC. Controls fatty acid oxidation by inhibiting PPARA transcriptional activation. Impairs SIRT1-PPARA interaction probably through the regulation of NAD(+) levels. Down-regulates insulin secretion. The chain is NAD-dependent protein lipoamidase sirtuin-4, mitochondrial from Bos taurus (Bovine).